We begin with the raw amino-acid sequence, 483 residues long: Isocitrate dehydrogenase [NADP] (483 aa).

Threonine 74 provides a ligand contact to NADP(+). Positions 83, 85, 89, 99, and 121 each coordinate D-threo-isocitrate. Aspartate 232 contributes to the Mg(2+) binding site. Residues 264-270 and asparagine 277 each bind NADP(+); that span reads HGSAPDI.

It belongs to the isocitrate and isopropylmalate dehydrogenases family. In terms of assembly, homodimer. Requires Mg(2+) as cofactor. Mn(2+) is required as a cofactor.

The catalysed reaction is D-threo-isocitrate + NADP(+) = 2-oxoglutarate + CO2 + NADPH. Its function is as follows. Catalyzes the oxidative decarboxylation of isocitrate to 2-oxoglutarate and carbon dioxide with the concomitant reduction of NADP(+). This is Isocitrate dehydrogenase [NADP] (icd) from Rickettsia conorii (strain ATCC VR-613 / Malish 7).